The sequence spans 245 residues: Collagen triple helix repeat-containing protein 1 (245 aa).

A signal peptide spans 1-32 (MHPQGRAASPQLLLGLFLVLLLLLQLSAPSSA). The Collagen-like domain maps to 59–92 (QGPAGVPGRDGSPGANGIPGTPGIPGRDGFKGEK). The disordered stretch occupies residues 64–87 (VPGRDGSPGANGIPGTPGIPGRDG). Asn-188 carries an N-linked (GlcNAc...) asparagine glycan.

In terms of processing, N-glycosylated. As to expression, expressed after injury in the carotid arteries (at protein level). Expressed in brain, lung, and after injury in fibroblasts of the adventitia and the neointima of the arteries.

It localises to the secreted. The protein localises to the extracellular space. Its subcellular location is the extracellular matrix. Its overexpression in smooth muscle cell lines increases their migratory ability and inhibits collagen type I expression. May act as a negative regulator of collagen matrix deposition. The protein is Collagen triple helix repeat-containing protein 1 (Cthrc1) of Rattus norvegicus (Rat).